A 460-amino-acid polypeptide reads, in one-letter code: MDEALNENASGSESDASSVASNLHDDEIIPWFFSREEIERNSPSRRDGIDLKTETRLRDSYCTFLEILGERLKVPQVTIATAIFFCHRFFLRQSHAKNDRQTIATVCMLLAGKVEETPVTLEDVIIASYERIHKKDLAGAQRKEVYDQQKELVLIGEELVLSTLNFDLCISHPYKPLVEAIKKYMVEDAKTQLAQFAWNFVNDCLRTTLCLQYQPHHIAAGAILLAAELPTVDLQSYREVLCQEFDITPCQLEDIRGQILELYERIPTSQESKVESSGGVAVVHQPISRDMASTEKCPSSDIEGGSSQVNLSQSDDHSVHDGSRSEGIGEVNSESEAQKNLQDHSVGNIMVEKSDDVGVVQLKKDLQLHQEEVESKQEKDKKSFEKDITKIDLMDEKDLTESEVEDEINKTMQTGRQIFMKVEDPDDNMTVEHSEIRNANNSGVDDELVADTCLINDSDL.

Disordered regions lie at residues 1–20 and 285–345; these read MDEA…SSVA and QPIS…QDHS. A compositionally biased stretch (basic and acidic residues) spans 314–324; the sequence is SDDHSVHDGSR. Polar residues predominate over residues 332-345; sequence NSESEAQKNLQDHS.

Belongs to the cyclin family. Cyclin T subfamily.

The chain is Cyclin-T1-2 (CYCT1-2) from Arabidopsis thaliana (Mouse-ear cress).